Reading from the N-terminus, the 323-residue chain is Prenyl transferase (323 aa).

Residues Lys46, Arg49, and His81 each coordinate isopentenyl diphosphate. Positions 88 and 92 each coordinate Mg(2+). Arg97 serves as a coordination point for an all-trans-polyprenyl diphosphate. Arg98 is a binding site for isopentenyl diphosphate. Residues Lys174, Thr175, and Gln212 each coordinate an all-trans-polyprenyl diphosphate.

The protein belongs to the FPP/GGPP synthase family. It depends on Mg(2+) as a cofactor.

Functionally, possible role in synthesis of the nonaprenyl side chain of plastoquinone or in synthesis of other prenyl chains such as undekaprenyl pyrophosphate. The protein is Prenyl transferase (preA) of Synechocystis sp. (strain ATCC 27184 / PCC 6803 / Kazusa).